Reading from the N-terminus, the 110-residue chain is Thiosulfate sulfurtransferase GlpE (110 aa).

The 89-residue stretch at 17-105 (HQGKAVLVDI…WHRHFPAEVE (89 aa)) folds into the Rhodanese domain. The active-site Cysteine persulfide intermediate is the cysteine 65.

The protein belongs to the GlpE family.

It is found in the cytoplasm. It carries out the reaction thiosulfate + hydrogen cyanide = thiocyanate + sulfite + 2 H(+). It catalyses the reaction thiosulfate + [thioredoxin]-dithiol = [thioredoxin]-disulfide + hydrogen sulfide + sulfite + 2 H(+). Its function is as follows. Transferase that catalyzes the transfer of sulfur from thiosulfate to thiophilic acceptors such as cyanide or dithiols. May function in a CysM-independent thiosulfate assimilation pathway by catalyzing the conversion of thiosulfate to sulfite, which can then be used for L-cysteine biosynthesis. The chain is Thiosulfate sulfurtransferase GlpE from Enterobacter sp. (strain 638).